A 530-amino-acid chain; its full sequence is GATA zinc finger domain-containing protein 4 (530 aa).

Disordered stretches follow at residues Met1–Asn27 and Ser212–Asn386. 3 stretches are compositionally biased toward low complexity: residues Asn7–Asn17, Ser216–Asn290, and Asn299–Asn386. Residues Cys494 to Cys518 form a GATA-type zinc finger.

The sequence is that of GATA zinc finger domain-containing protein 4 (gtaD) from Dictyostelium discoideum (Social amoeba).